The sequence spans 350 residues: Olfactory receptor 52I2 (350 aa).

The Extracellular segment spans residues 1 to 55 (MCQQILRDCILLIHHLCINRKKVSLVMLGPAYNHTMETPASFLLVGIPGLQSSHL). The N-linked (GlcNAc...) asparagine glycan is linked to Asn-33. Residues 56–76 (WLAISLSAMYIIALLGNTIIV) form a helical membrane-spanning segment. Over 77 to 84 (TAIWMDST) the chain is Cytoplasmic. A helical transmembrane segment spans residues 85–105 (RHEPMYCFLCVLAAVDIVMAS). The Extracellular segment spans residues 106 to 129 (SVVPKMVSIFCSGDSSISFSACFT). Cysteines 127 and 219 form a disulfide. A helical transmembrane segment spans residues 130 to 150 (QMFFVHLATAVETGLLLTMAF). Residues 151-169 (DRYVAICKPLHYKRILTPQ) are Cytoplasmic-facing. The helical transmembrane segment at 170–190 (VMLGMSMAITIRAIIAITPLS) threads the bilayer. The Extracellular segment spans residues 191 to 226 (WMVSHLPFCGSNVVVHSYCEHIALARLACADPVPSS). Residues 227–247 (LYSLIGSSLMVGSDVAFIAAS) form a helical membrane-spanning segment. At 248–267 (YILILKAVFGLSSKTAQLKA) the chain is on the cytoplasmic side. The helical transmembrane segment at 268-288 (LSTCGSHVGVMALYYLPGMAS) threads the bilayer. Residues 289–304 (IYAAWLGQDVVPLHTQ) lie on the Extracellular side of the membrane. Residues 305-325 (VLLADLYVIIPATLNPIIYGM) traverse the membrane as a helical segment. The Cytoplasmic portion of the chain corresponds to 326–350 (RTKQLRERIWSYLMHVLFDHSNLGS).

This sequence belongs to the G-protein coupled receptor 1 family.

Its subcellular location is the cell membrane. Its function is as follows. Odorant receptor. This is Olfactory receptor 52I2 (OR52I2) from Homo sapiens (Human).